A 426-amino-acid polypeptide reads, in one-letter code: Enolase (426 aa).

Gln-163 serves as a coordination point for (2R)-2-phosphoglycerate. Glu-205 functions as the Proton donor in the catalytic mechanism. Positions 242, 286, and 313 each coordinate Mg(2+). (2R)-2-phosphoglycerate-binding residues include Lys-338, Arg-367, Ser-368, and Lys-389. Lys-338 acts as the Proton acceptor in catalysis.

This sequence belongs to the enolase family. The cofactor is Mg(2+).

It is found in the cytoplasm. Its subcellular location is the secreted. The protein resides in the cell surface. It catalyses the reaction (2R)-2-phosphoglycerate = phosphoenolpyruvate + H2O. It functions in the pathway carbohydrate degradation; glycolysis; pyruvate from D-glyceraldehyde 3-phosphate: step 4/5. Catalyzes the reversible conversion of 2-phosphoglycerate (2-PG) into phosphoenolpyruvate (PEP). It is essential for the degradation of carbohydrates via glycolysis. This is Enolase from Helicobacter pylori (strain J99 / ATCC 700824) (Campylobacter pylori J99).